Consider the following 160-residue polypeptide: Ribosomal RNA large subunit methyltransferase H (160 aa).

Residues Leu-76, Gly-108, and 127–132 (LGKMTW) contribute to the S-adenosyl-L-methionine site.

Belongs to the RNA methyltransferase RlmH family. In terms of assembly, homodimer.

It localises to the cytoplasm. The enzyme catalyses pseudouridine(1915) in 23S rRNA + S-adenosyl-L-methionine = N(3)-methylpseudouridine(1915) in 23S rRNA + S-adenosyl-L-homocysteine + H(+). Its function is as follows. Specifically methylates the pseudouridine at position 1915 (m3Psi1915) in 23S rRNA. This is Ribosomal RNA large subunit methyltransferase H from Rhizobium johnstonii (strain DSM 114642 / LMG 32736 / 3841) (Rhizobium leguminosarum bv. viciae).